Here is a 348-residue protein sequence, read N- to C-terminus: tRNA N6-adenosine threonylcarbamoyltransferase (348 aa).

Residues His115 and His119 each coordinate Fe cation. Substrate is bound by residues 137–141 (LASGG), Asp170, Gly183, and Asn281. Position 309 (Asp309) interacts with Fe cation.

It belongs to the KAE1 / TsaD family. Requires Fe(2+) as cofactor.

The protein localises to the cytoplasm. It carries out the reaction L-threonylcarbamoyladenylate + adenosine(37) in tRNA = N(6)-L-threonylcarbamoyladenosine(37) in tRNA + AMP + H(+). Functionally, required for the formation of a threonylcarbamoyl group on adenosine at position 37 (t(6)A37) in tRNAs that read codons beginning with adenine. Is involved in the transfer of the threonylcarbamoyl moiety of threonylcarbamoyl-AMP (TC-AMP) to the N6 group of A37, together with TsaE and TsaB. TsaD likely plays a direct catalytic role in this reaction. This chain is tRNA N6-adenosine threonylcarbamoyltransferase, found in Methylobacterium sp. (strain 4-46).